Reading from the N-terminus, the 154-residue chain is Ribonuclease H (154 aa).

Residues 1 to 142 form the RNase H type-1 domain; sequence MTKQVEIFTD…CDELARQGAN (142 aa). Positions 10, 48, 70, and 134 each coordinate Mg(2+).

This sequence belongs to the RNase H family. In terms of assembly, monomer. Requires Mg(2+) as cofactor.

It localises to the cytoplasm. The enzyme catalyses Endonucleolytic cleavage to 5'-phosphomonoester.. Its function is as follows. Endonuclease that specifically degrades the RNA of RNA-DNA hybrids. This is Ribonuclease H from Yersinia pestis bv. Antiqua (strain Antiqua).